Reading from the N-terminus, the 436-residue chain is Enolase (436 aa).

Substrate is bound by residues His-159 and Glu-168. Glu-211 functions as the Proton donor in the catalytic mechanism. Mg(2+)-binding residues include Asp-246, Glu-295, and Asp-322. 2 residues coordinate substrate: Glu-295 and Asp-322. The active-site Proton acceptor is the Lys-347. Residues 374-377 and Lys-398 contribute to the substrate site; that span reads SHRS.

The protein belongs to the enolase family. Homodimer. Mg(2+) is required as a cofactor.

It is found in the cytoplasm. It catalyses the reaction (2R)-2-phosphoglycerate = phosphoenolpyruvate + H2O. Its pathway is carbohydrate degradation; glycolysis; pyruvate from D-glyceraldehyde 3-phosphate: step 4/5. This is Enolase from Neocallimastix frontalis (Rumen fungus).